We begin with the raw amino-acid sequence, 1246 residues long: Putative helicase L115 (1246 aa).

A disordered region spans residues 1–21 (MSKTITKKVNKKTKKSTKINP). Residues 872 to 1030 (AKFTDGYHGF…YYMLKMLQTG (159 aa)) enclose the Helicase ATP-binding domain. 885–892 (SDVGSGKT) is a binding site for ATP.

The chain is Putative helicase L115 from Acanthamoeba polyphaga (Amoeba).